Here is a 216-residue protein sequence, read N- to C-terminus: MSFFISLEGIEGSGKTTQIKRLADRLESLGHAVLITREPGGCPIADQIRQILLHPDNGHLDPKAELLLYAAARAQHVAEVIRPALDQGKIVLCDRYCDATLAYQGYARGLDLPMVKQLNELAAGNCRPHLTLLLDMPHDRGLLRARSRNALGAGPEEGRFEQESLAFHNKVRQGYLDLARQEPQRIKVVDANGTLDEVCHRIWLTTSNALNLPGGM.

Residue 9–16 (GIEGSGKT) coordinates ATP.

This sequence belongs to the thymidylate kinase family.

The enzyme catalyses dTMP + ATP = dTDP + ADP. Phosphorylation of dTMP to form dTDP in both de novo and salvage pathways of dTTP synthesis. The protein is Thymidylate kinase of Syntrophotalea carbinolica (strain DSM 2380 / NBRC 103641 / GraBd1) (Pelobacter carbinolicus).